Here is a 569-residue protein sequence, read N- to C-terminus: Glucose-6-phosphate isomerase, cytosolic 2 (569 aa).

The active-site Proton donor is the E360. Residues H391 and K516 contribute to the active site.

The protein belongs to the GPI family. Homodimer.

It localises to the cytoplasm. The catalysed reaction is alpha-D-glucose 6-phosphate = beta-D-fructose 6-phosphate. It functions in the pathway carbohydrate degradation; glycolysis; D-glyceraldehyde 3-phosphate and glycerone phosphate from D-glucose: step 2/4. This is Glucose-6-phosphate isomerase, cytosolic 2 (PGIC2) from Clarkia concinna (Red ribbons).